We begin with the raw amino-acid sequence, 569 residues long: Proline--tRNA ligase (569 aa).

Belongs to the class-II aminoacyl-tRNA synthetase family. ProS type 1 subfamily. As to quaternary structure, homodimer.

It localises to the cytoplasm. The catalysed reaction is tRNA(Pro) + L-proline + ATP = L-prolyl-tRNA(Pro) + AMP + diphosphate. Catalyzes the attachment of proline to tRNA(Pro) in a two-step reaction: proline is first activated by ATP to form Pro-AMP and then transferred to the acceptor end of tRNA(Pro). As ProRS can inadvertently accommodate and process non-cognate amino acids such as alanine and cysteine, to avoid such errors it has two additional distinct editing activities against alanine. One activity is designated as 'pretransfer' editing and involves the tRNA(Pro)-independent hydrolysis of activated Ala-AMP. The other activity is designated 'posttransfer' editing and involves deacylation of mischarged Ala-tRNA(Pro). The misacylated Cys-tRNA(Pro) is not edited by ProRS. The polypeptide is Proline--tRNA ligase (Shewanella woodyi (strain ATCC 51908 / MS32)).